Consider the following 400-residue polypeptide: Serine/threonine-protein kinase AFC3 (400 aa).

The interval 1–29 is disordered; sequence MIANGFESMDKERVRKRPRMTWDEAPAEP. Residues 71–396 form the Protein kinase domain; sequence YKILSKMGEG…ANEALDHPFF (326 aa). ATP contacts are provided by residues 77 to 85 and K100; that span reads MGEGTFGRV. D196 acts as the Proton acceptor in catalysis.

It belongs to the protein kinase superfamily. CMGC Ser/Thr protein kinase family. Lammer subfamily.

It catalyses the reaction L-seryl-[protein] + ATP = O-phospho-L-seryl-[protein] + ADP + H(+). The enzyme catalyses L-threonyl-[protein] + ATP = O-phospho-L-threonyl-[protein] + ADP + H(+). It carries out the reaction L-tyrosyl-[protein] + ATP = O-phospho-L-tyrosyl-[protein] + ADP + H(+). This Arabidopsis thaliana (Mouse-ear cress) protein is Serine/threonine-protein kinase AFC3 (AFC3).